The chain runs to 89 residues: Neurotoxin LmNaTx28 (89 aa).

The first 18 residues, 1 to 18 (MNLPTVLCIIALILGVRS), serve as a signal peptide directing secretion. The 66-residue stretch at 20-85 (KNGFFTKLGK…VADSSEKACQ (66 aa)) folds into the LCN-type CS-alpha/beta domain. Intrachain disulfides connect Cys-33–Cys-57, Cys-43–Cys-62, Cys-47–Cys-64, and Cys-58–Cys-84.

Belongs to the long (4 C-C) scorpion toxin superfamily. Sodium channel inhibitor family. Beta subfamily. In terms of tissue distribution, expressed by the venom gland.

Its subcellular location is the secreted. Binds voltage-independently at site-4 of sodium channels (Nav) and shift the voltage of activation toward more negative potentials thereby affecting sodium channel activation and promoting spontaneous and repetitive firing. This is Neurotoxin LmNaTx28 from Lychas mucronatus (Chinese swimming scorpion).